The following is a 471-amino-acid chain: Putative multidrug resistance protein MdtD (471 aa).

At methionine 1 to glutamine 11 the chain is on the periplasmic side. The chain crosses the membrane as a helical span at residues leucine 12–alanine 32. At leucine 33–histidine 48 the chain is on the cytoplasmic side. The helical transmembrane segment at methionine 49–alanine 69 threads the bilayer. At aspartate 70–asparagine 76 the chain is on the periplasmic side. A helical transmembrane segment spans residues isoleucine 77–threonine 97. The Cytoplasmic segment spans residues leucine 98–leucine 101. Residues leucine 102–methionine 124 form a helical membrane-spanning segment. Residues lysine 125–threonine 137 lie on the Periplasmic side of the membrane. The helical transmembrane segment at phenylalanine 138–valine 158 threads the bilayer. Residues glutamate 159 to histidine 164 are Cytoplasmic-facing. The helical transmembrane segment at tryptophan 165–methionine 185 threads the bilayer. Over proline 186 to aspartate 196 the chain is Periplasmic. Residues leucine 197–serine 217 traverse the membrane as a helical segment. At lysine 218 to proline 224 the chain is on the cytoplasmic side. Residues leucine 225–alanine 245 form a helical membrane-spanning segment. The Periplasmic portion of the chain corresponds to arginine 246–threonine 262. The chain crosses the membrane as a helical span at residues phenylalanine 263–methionine 283. Residues threonine 284–proline 285 are Cytoplasmic-facing. A helical transmembrane segment spans residues valine 286 to methionine 306. Over valine 307–threonine 341 the chain is Periplasmic. A helical transmembrane segment spans residues leucine 342–leucine 362. Over glutamine 363–serine 395 the chain is Cytoplasmic. A helical transmembrane segment spans residues methionine 396–phenylalanine 416. Residues glycine 417–threonine 430 lie on the Periplasmic side of the membrane. Residues valine 431–alanine 451 form a helical membrane-spanning segment. At arginine 452–glutamine 471 the chain is on the cytoplasmic side.

This sequence belongs to the major facilitator superfamily. TCR/Tet family.

It localises to the cell inner membrane. This Escherichia coli O139:H28 (strain E24377A / ETEC) protein is Putative multidrug resistance protein MdtD.